The primary structure comprises 71 residues: Small ribosomal subunit protein bS21 (71 aa).

Over residues 49 to 59 the composition is skewed to basic residues; it reads KAAAVKRAAKK. The tract at residues 49–71 is disordered; that stretch reads KAAAVKRAAKKVSRENARRVRMY. Residues 60-71 are compositionally biased toward basic and acidic residues; that stretch reads VSRENARRVRMY.

It belongs to the bacterial ribosomal protein bS21 family.

In Colwellia psychrerythraea (strain 34H / ATCC BAA-681) (Vibrio psychroerythus), this protein is Small ribosomal subunit protein bS21.